The following is a 589-amino-acid chain: MSLSNLGPGGVHSPLWRWVVERVWRLEHAFERSRAAARPEDDTRIRIFLVMGFFGFCFVGVSLGAGWSALFSRAGQGGGYAQGVEGARGDVVDRNGKLLAVDLAHYALYVDPREVWDAKETRAALGRALPQVPAKRLDKAVFGDHRAFVLGGLTPDEKDAIFNLGLPGVTFEEQERRMYPLGPTAAHLIGFVDSGGKGLAGAERALDDPIRKAAGGEGGPAQLSIDVRVQAALEDELRKAAEEFTPKGAVGLVTNVHTGEILGMASWPDYDANKAGGATDDQRLNRAAASVYEMGSTFKAFTVAIGLDTGVATAASTFDAREPYKLGYRTIHDYHATKAVLNLVEVFQHSSNIGTAMLAERVGGQRLSQYFTNLGLTKPAKVELQESARPLTPRKWDQDTVASTSFGHGMNISPLALAQAMNALLNGGEMRPLTIRKLPPGVRPEGRRVLSEHTSAEMLKIMRANVVPGEGGSGGKADVPGLSVGGKTGTGEKYDPAIRRYNHQRQVSSFAATFPTDGPLEADRYFVLILLDEPKGNANSFGFSTGGWVAAPAAGRVIERIAPFLGVKRKTELVTIANSPKNAAPEAGL.

A helical transmembrane segment spans residues 47-67 (IFLVMGFFGFCFVGVSLGAGW). The active-site Acyl-ester intermediate is the S296.

This sequence belongs to the transpeptidase family. In terms of assembly, interacts with FtsN and FtsW.

It is found in the cell inner membrane. The catalysed reaction is Preferential cleavage: (Ac)2-L-Lys-D-Ala-|-D-Ala. Also transpeptidation of peptidyl-alanyl moieties that are N-acyl substituents of D-alanine.. It functions in the pathway cell wall biogenesis; peptidoglycan biosynthesis. In terms of biological role, catalyzes cross-linking of the peptidoglycan cell wall at the division septum. The polypeptide is Probable peptidoglycan D,D-transpeptidase FtsI (ftsI) (Caulobacter vibrioides (strain NA1000 / CB15N) (Caulobacter crescentus)).